The following is a 230-amino-acid chain: Urease accessory protein UreF (230 aa).

It belongs to the UreF family. As to quaternary structure, ureD, UreF and UreG form a complex that acts as a GTP-hydrolysis-dependent molecular chaperone, activating the urease apoprotein by helping to assemble the nickel containing metallocenter of UreC. The UreE protein probably delivers the nickel.

It localises to the cytoplasm. Required for maturation of urease via the functional incorporation of the urease nickel metallocenter. In Cupriavidus pinatubonensis (strain JMP 134 / LMG 1197) (Cupriavidus necator (strain JMP 134)), this protein is Urease accessory protein UreF.